The following is a 371-amino-acid chain: Queuine tRNA-ribosyltransferase (371 aa).

Catalysis depends on D90, which acts as the Proton acceptor. Residues 90-94, D144, Q188, and G215 each bind substrate; that span reads DSGGF. The segment at 246–252 is RNA binding; the sequence is GVGTPED. D265 acts as the Nucleophile in catalysis. The tract at residues 270–274 is RNA binding; important for wobble base 34 recognition; that stretch reads TRNAR. Residues C303, C305, C308, and H334 each contribute to the Zn(2+) site.

This sequence belongs to the queuine tRNA-ribosyltransferase family. In terms of assembly, homodimer. Within each dimer, one monomer is responsible for RNA recognition and catalysis, while the other monomer binds to the replacement base PreQ1. Zn(2+) serves as cofactor.

The catalysed reaction is 7-aminomethyl-7-carbaguanine + guanosine(34) in tRNA = 7-aminomethyl-7-carbaguanosine(34) in tRNA + guanine. Its pathway is tRNA modification; tRNA-queuosine biosynthesis. In terms of biological role, catalyzes the base-exchange of a guanine (G) residue with the queuine precursor 7-aminomethyl-7-deazaguanine (PreQ1) at position 34 (anticodon wobble position) in tRNAs with GU(N) anticodons (tRNA-Asp, -Asn, -His and -Tyr). Catalysis occurs through a double-displacement mechanism. The nucleophile active site attacks the C1' of nucleotide 34 to detach the guanine base from the RNA, forming a covalent enzyme-RNA intermediate. The proton acceptor active site deprotonates the incoming PreQ1, allowing a nucleophilic attack on the C1' of the ribose to form the product. After dissociation, two additional enzymatic reactions on the tRNA convert PreQ1 to queuine (Q), resulting in the hypermodified nucleoside queuosine (7-(((4,5-cis-dihydroxy-2-cyclopenten-1-yl)amino)methyl)-7-deazaguanosine). This is Queuine tRNA-ribosyltransferase from Neisseria meningitidis serogroup C (strain 053442).